Here is a 124-residue protein sequence, read N- to C-terminus: Acidic phospholipase A2 (124 aa).

7 disulfides stabilise this stretch: C26–C116, C28–C44, C43–C95, C49–C124, C50–C88, C57–C81, and C75–C86. 3 residues coordinate Ca(2+): Y27, G29, and G31. Residue H47 is part of the active site. D48 lines the Ca(2+) pocket. D89 is a catalytic residue.

Belongs to the phospholipase A2 family. Group II subfamily. D49 sub-subfamily. Monomer. Ca(2+) serves as cofactor. Expressed by the venom gland.

It is found in the secreted. The catalysed reaction is a 1,2-diacyl-sn-glycero-3-phosphocholine + H2O = a 1-acyl-sn-glycero-3-phosphocholine + a fatty acid + H(+). Snake venom phospholipase A2 (PLA2) that acts in vivo as an anti-thrombotic agent. Inhibits platelet aggregation induced by ADP, arachidonic acid, and thrombin. PLA2 catalyzes the calcium-dependent hydrolysis of the 2-acyl groups in 3-sn-phosphoglycerides. In Gloydius halys (Chinese water mocassin), this protein is Acidic phospholipase A2.